Consider the following 415-residue polypeptide: tRNA(Met) cytidine acetate ligase (415 aa).

ATP is bound by residues 7 to 20 (VVEYNPFHNGHLYH), G101, N162, and 187 to 188 (RI).

The protein belongs to the TmcAL family. As to quaternary structure, homodimer.

The protein localises to the cytoplasm. It catalyses the reaction cytidine(34) in elongator tRNA(Met) + acetate + ATP = N(4)-acetylcytidine(34) in elongator tRNA(Met) + AMP + diphosphate. Its function is as follows. Catalyzes the formation of N(4)-acetylcytidine (ac(4)C) at the wobble position of elongator tRNA(Met), using acetate and ATP as substrates. First activates an acetate ion to form acetyladenylate (Ac-AMP) and then transfers the acetyl group to tRNA to form ac(4)C34. The chain is tRNA(Met) cytidine acetate ligase from Bacillus subtilis (strain 168).